The chain runs to 218 residues: Probable transaldolase (218 aa).

Catalysis depends on Lys-87, which acts as the Schiff-base intermediate with substrate.

The protein belongs to the transaldolase family. Type 3B subfamily.

It localises to the cytoplasm. The catalysed reaction is D-sedoheptulose 7-phosphate + D-glyceraldehyde 3-phosphate = D-erythrose 4-phosphate + beta-D-fructose 6-phosphate. It functions in the pathway carbohydrate degradation; pentose phosphate pathway; D-glyceraldehyde 3-phosphate and beta-D-fructose 6-phosphate from D-ribose 5-phosphate and D-xylulose 5-phosphate (non-oxidative stage): step 2/3. Functionally, transaldolase is important for the balance of metabolites in the pentose-phosphate pathway. This is Probable transaldolase from Flavobacterium psychrophilum (strain ATCC 49511 / DSM 21280 / CIP 103535 / JIP02/86).